We begin with the raw amino-acid sequence, 997 residues long: Disease resistance protein RML1A (997 aa).

Residues 12–176 (WRYRVFTSFH…KIARDVSEKL (165 aa)) enclose the TIR domain. Glu-87 is an active-site residue. In terms of domain architecture, NB-ARC spans 191–447 (EAHLRKIQSL…HIAIFFNYED (257 aa)). LRR repeat units follow at residues 194 to 218 (LRKI…GPAG), 534 to 557 (TSGI…RFLS), 600 to 623 (AENL…TQLL), 624 to 647 (TKLK…SNAT), 649 to 670 (LEML…IKNL), 671 to 693 (HKLD…NINL), 694 to 714 (ASLE…PAFS), 715 to 737 (TKIK…ITHC), 758 to 781 (PSSL…CIKD), and 783 to 808 (QRLD…SLRL).

It carries out the reaction NAD(+) + H2O = ADP-D-ribose + nicotinamide + H(+). Its function is as follows. TIR-NB-LRR receptor-like protein that confers resistance to the pathogen Leptosphaeria maculans (blackleg disease). The polypeptide is Disease resistance protein RML1A (Arabidopsis thaliana (Mouse-ear cress)).